Consider the following 563-residue polypeptide: Glucocorticoid modulatory element-binding protein 1 (563 aa).

Ala2 bears the N-acetylalanine mark. Residues 72–156 (ASTIEANEDM…RKMMDSGQID (85 aa)) enclose the SAND domain. Cys103 lines the Zn(2+) pocket. DNA is bound by residues Lys129, Lys133, Lys136, and Arg147. Residues His160, Cys164, and Cys168 each contribute to the Zn(2+) site. Residues 304–355 (MDTVKKVLDNRKNQVEQGEEQFLYTLTDLERQLEEQKKQAQDHRLKSQTVQN) are a coiled coil. A disordered region spans residues 360–385 (PVSTPKPPKRPRLQRPASTTVLSPSP).

As to quaternary structure, homodimer, and heterodimer of GMEB1 and GMEB2. Interacts with TRIM63. Interacts with the glucocorticoid receptor (NR3C1) and NCOA2/TIF2. May interact with HSP27 and CREB-binding protein (CBP).

It localises to the nucleus. It is found in the cytoplasm. Trans-acting factor that binds to glucocorticoid modulatory elements (GME) present in the TAT (tyrosine aminotransferase) promoter and increases sensitivity to low concentrations of glucocorticoids. Also binds to the transferrin receptor promoter. The polypeptide is Glucocorticoid modulatory element-binding protein 1 (GMEB1) (Bos taurus (Bovine)).